A 273-amino-acid polypeptide reads, in one-letter code: WIMGHMVNAIYQIDEFVNLGANSIETDVSFDDNANPEYTYHGIPCDCGRSCLKWENYNDFLKGLRSATTPGNSKYQSKLILVVFDLKTGSLYDNQASEAGKKLAKNLLKHYWNNGNNGGRAYIVLSIPDLNHYPLIKGFTDTLKQEGHPELLEKVGYDFSGNDAVGDVAKAYKKAGVSGHVWQSDGITNCLLRGLTRVKEAVANRDSGNGYINKVYYWTVDKRATTRDALDAGVDGVMTNYPDVIADVMNEAAYKNKVRLATYEDSPWVTFKK.

The active site involves histidine 5. Mg(2+)-binding residues include glutamate 25 and aspartate 27. Residue histidine 41 is the Nucleophile of the active site. Intrachain disulfides connect cysteine 45–cysteine 51 and cysteine 47–cysteine 190. Aspartate 85 provides a ligand contact to Mg(2+).

The protein belongs to the arthropod phospholipase D family. Class II subfamily. The cofactor is Mg(2+). Expressed by the venom gland.

The protein localises to the secreted. The enzyme catalyses an N-(acyl)-sphingosylphosphocholine = an N-(acyl)-sphingosyl-1,3-cyclic phosphate + choline. The catalysed reaction is an N-(acyl)-sphingosylphosphoethanolamine = an N-(acyl)-sphingosyl-1,3-cyclic phosphate + ethanolamine. It carries out the reaction a 1-acyl-sn-glycero-3-phosphocholine = a 1-acyl-sn-glycero-2,3-cyclic phosphate + choline. It catalyses the reaction a 1-acyl-sn-glycero-3-phosphoethanolamine = a 1-acyl-sn-glycero-2,3-cyclic phosphate + ethanolamine. Its function is as follows. Dermonecrotic toxins cleave the phosphodiester linkage between the phosphate and headgroup of certain phospholipids (sphingolipid and lysolipid substrates), forming an alcohol (often choline) and a cyclic phosphate. This toxin acts on sphingomyelin (SM). It may also act on ceramide phosphoethanolamine (CPE), lysophosphatidylcholine (LPC) and lysophosphatidylethanolamine (LPE), but not on lysophosphatidylserine (LPS), and lysophosphatidylglycerol (LPG). It acts by transphosphatidylation, releasing exclusively cyclic phosphate products as second products. Induces dermonecrosis, hemolysis, increased vascular permeability, edema, inflammatory response, and platelet aggregation. The sequence is that of Dermonecrotic toxin LhSicTox-alphaIA2ai from Loxosceles hirsuta (Recluse spider).